Consider the following 710-residue polypeptide: Lactoperoxidase (710 aa).

The signal sequence occupies residues 1–22 (MKVLLRLPALLASLTLLQMAAS). The propeptide occupies 23-98 (TRNATRTATI…WEQSLKRLRR (76 aa)). 3 N-linked (GlcNAc...) asparagine glycosylation sites follow: Asn25, Asn104, and Asn131. A disulfide bridge links Cys130 with Cys143. Heme b is bound at residue Asp223. His224 serves as the catalytic Proton acceptor. Asp225 contributes to the Ca(2+) binding site. Asn238 is a glycosylation site (N-linked (GlcNAc...) asparagine). 2 cysteine pairs are disulfide-bonded: Cys244/Cys254 and Cys248/Cys272. Ca(2+)-binding residues include Thr299, Phe301, Asp303, and Ser305. Residue Ser313 is modified to Phosphoserine. Asn320 carries N-linked (GlcNAc...) asparagine glycosylation. Residues Cys352 and Cys363 are joined by a disulfide bond. Heme b contacts are provided by Glu373 and His466. Tyr480 carries the post-translational modification 3'-nitrotyrosine. 2 disulfide bridges follow: Cys571–Cys628 and Cys669–Cys694.

The protein belongs to the peroxidase family. XPO subfamily. It depends on Ca(2+) as a cofactor. The cofactor is heme b. Expressed in the lacrimal gland with higher levels and 3-fold higher activity in adult females than males and secreted into tears (at protein level).

It is found in the secreted. It localises to the cytoplasm. The enzyme catalyses 2 a phenolic donor + H2O2 = 2 a phenolic radical donor + 2 H2O. It catalyses the reaction thiocyanate + H2O2 + H(+) = hypothiocyanous acid + H2O. It carries out the reaction iodide + H2O2 = hypoiodite + H2O. Heme-containing oxidoreductase which catalyzes the conversion of thiocyanate (SCN(-)) into antimicrobial agent hypothiocyanous acid (OSCN(-)) in the presence of hydrogen peroxide (H2O2). Also involved in the conversion of iodide (I(-)) into hypoiodite (IO(-)) in the presence of H2O2. Responsible for the inactivation of a wide range of micro-organisms and hence, important component of defense mechanism. May be implicated in airway host defense against infection. May contribute to maintaining an appropriate H2O2 cellular level, therefore protecting cells from H2O2-caused injuries and inflammation. This chain is Lactoperoxidase (LPO), found in Mesocricetus auratus (Golden hamster).